The sequence spans 466 residues: Fumarate hydratase class II (466 aa).

Residues serine 99–threonine 101, histidine 129–aspartate 132, serine 139–asparagine 141, and threonine 187 contribute to the substrate site. Histidine 188 functions as the Proton donor/acceptor in the catalytic mechanism. The active site involves serine 318. Residues serine 319 and lysine 324–asparagine 326 each bind substrate.

This sequence belongs to the class-II fumarase/aspartase family. Fumarase subfamily. In terms of assembly, homotetramer.

It is found in the cytoplasm. It carries out the reaction (S)-malate = fumarate + H2O. It functions in the pathway carbohydrate metabolism; tricarboxylic acid cycle; (S)-malate from fumarate: step 1/1. In terms of biological role, involved in the TCA cycle. Catalyzes the stereospecific interconversion of fumarate to L-malate. The chain is Fumarate hydratase class II from Thermus aquaticus.